The primary structure comprises 754 residues: MWKLLPAAGPAGGEPYRLLTGVEYVVGRKNCAILIENDQSISRNHAVLTANFSVTNLSQTDEIPVLTLKDNSKYGTFVNEEKMQNGFSRTLKSGDGITFGVFGSKFRIEYEPLVACSSCLDVSGKTALNQAILQLGGFTVNNWTEECTHLVMVSVKVTIKTICALICGRPIVKPEYFTEFLKAVESKKQPPQIESFYPPLDEPSIGSKNVDLSGRQERKQIFKGKTFIFLNAKQHKKLSSAVVFGGGEARLITEENEEEHNFFLAPGTCVVDTGITNSQTLIPDCQKKWIQSIMDMLQRQGLRPIPEAEIGLAVIFMTTKNYCDPQGHPSTGLKTTTPGPSLSQGVSVDEKLMPSAPVNTTTYVADTESEQADTWDLSERPKEIKVSKMEQKFRMLSQDAPTVKESCKTSSNNNSMVSNTLAKMRIPNYQLSPTKLPSINKSKDRASQQQQTNSIRNYFQPSTKKRERDEENQEMSSCKSARIETSCSLLEQTQPATPSLWKNKEQHLSENEPVDTNSDNNLFTDTDLKSIVKNSASKSHAAEKLRSNKKREMDDVAIEDEVLEQLFKDTKPELEIDVKVQKQEEDVNVRKRPRMDIETNDTFSDEAVPESSKISQENEIGKKRELKEDSLWSAKEISNNDKLQDDSEMLPKKLLLTEFRSLVIKNSTSRNPSGINDDYGQLKNFKKFKKVTYPGAGKLPHIIGGSDLIAHHARKNTELEEWLRQEMEVQNQHAKEESLADDLFRYNPYLKRRR.

One can recognise an FHA domain in the interval 24 to 83 (YVVGRKNCAILIENDQSISRNHAVLTANFSVTNLSQTDEIPVLTLKDNSKYGTFVNEEKM). 2 BRCT domains span residues 105-181 (KFRI…TEFL) and 224-315 (GKTF…LAVI). Residues 111 to 328 (EPLVACSSCL…TKNYCDPQGH (218 aa)) are mediates interaction with SP100. Residues 221–402 (IFKGKTFIFL…FRMLSQDAPT (182 aa)) are interaction with MTOR, MAPKAP1 and RICTOR. Ser-278 carries the post-translational modification Phosphoserine; by ATM. Residues 326–346 (QGHPSTGLKTTTPGPSLSQGV) form a disordered region. Polar residues predominate over residues 328-346 (HPSTGLKTTTPGPSLSQGV). At Thr-337 the chain carries Phosphothreonine. Ser-343 carries the post-translational modification Phosphoserine; by ATM. Ser-347 is modified (phosphoserine). Position 388 is an N6-lactoyllysine (Lys-388). 2 disordered regions span residues 396-415 (LSQDAPTVKESCKTSSNNNS) and 430-478 (QLSP…MSSC). A Phosphoserine modification is found at Ser-397. Position 402 is a phosphothreonine (Thr-402). Composition is skewed to polar residues over residues 430–440 (QLSPTKLPSIN) and 447–462 (SQQQQTNSIRNYFQPS). At Ser-432 the chain carries Phosphoserine; by CDK2. Residue Lys-435 forms a Glycyl lysine isopeptide (Lys-Gly) (interchain with G-Cter in ubiquitin) linkage. Positions 461-467 (PSTKKRE) match the Nuclear localization signal motif. Residues Ser-509 and Ser-518 each carry the phosphoserine modification. Glycyl lysine isopeptide (Lys-Gly) (interchain with G-Cter in SUMO2) cross-links involve residues Lys-529, Lys-571, and Lys-582. Phosphoserine is present on residues Ser-615 and Ser-673. Residues Lys-686, Lys-690, and Lys-735 each participate in a glycyl lysine isopeptide (Lys-Gly) (interchain with G-Cter in ubiquitin) cross-link. Positions 740 to 749 (ADDLFRYNPY) match the FxF/Y motif motif.

It belongs to the Nibrin family. As to quaternary structure, component of the MRN complex composed of two heterodimers RAD50 and MRE11 associated with a single NBN. The MRN complexes dimerize on DNA to form joined MRN-MRN oligomers required for DNA double-strand break repair. As part of the MRN complex, interacts with MCM9; the interaction recruits the complex to DNA repair sites. Component of the BASC complex, at least composed of BRCA1, MSH2, MSH6, MLH1, ATM, BLM, RAD50, MRE11 and NBN. Interacts with histone H2AX; this requires phosphorylation of H2AX on 'Ser-139' and promotes NBN recruitment to DNA damage sites. Interacts with (phosphorylated) MDC1; promoting NBN recruitment to DNA damage sites. Interacts with (phosphorylated) RAD17; promoting NBN recruitment to DNA damage sites. Interacts (via FxF/Y motif) with ATM. Interacts with HJURP. Interacts with INTS3. Interacts with KPNA2. Interacts with TERF2; interaction is disrupted upon NBN phosphorylation by CDK2. Interacts with (phosphorylated) RBBP8/CtIP; the interaction links the role of the MRN complex in DNA double-strand break sensing to resection. Interacts with SP100; recruits NBN to PML bodies. Interacts with ATF2. Interacts with MTOR, MAPKAP1 isoform 2 and RICTOR; indicative for an association with the mTORC2 complex. Interacts with MRNIP. Interacts with UFL1; promoting UFL1 recruitment to double-strand breaks following DNA damage. Interacts with CYREN (via XLF motif). (Microbial infection) Interacts with herpes simplex virus 1 protein UL12. Post-translationally, phosphorylated by ATM in response of ionizing radiation, and such phosphorylation is responsible intra-S phase checkpoint control and telomere maintenance. Phosphorylated at Ser-432 by CDK2 in S/G2 phases abolishes interaction with TERF2, enabling DCLRE1B/Apollo recruitment to telomeres. Phosphorylation at Ser-432 in response to dysfunctional telomeres promotes non-homologous end joining repair at telomeres, while dephosphorylation by PPP1CA promotes microhomology-mediated end-joining (MMEJ) repair. In terms of processing, ubiquitinated at Lys-435 via 'Lys-6'-linked ubiquitin chains by RNF8, promoting NBN recruitment to DNA double-strand breaks (DSBs). Ubiquitinated at Lys-686 and Lys-689 via 'Lys-63'-linked ubiquitin chains by PELI1: ubiquitination takes place following PELI1 phosphorylation and promotes ATM activation and DNA repair. Ubiquitinated at Lys-735 via 'Lys-63'-linked ubiquitin chains by the SCF(SKP2) complex: ubiquitination takes place following SKP2 phosphorylation and promotes ATM activation and DNA repair. Lactylation at Lys-388 by KAT5 in response to DNA damage promotes recruitment of the MRN complex to DNA damage sites. Delactylated by HDAC3. Ubiquitous. Expressed at high levels in testis.

Its subcellular location is the nucleus. The protein resides in the chromosome. The protein localises to the PML body. It is found in the telomere. In terms of biological role, component of the MRN complex, which plays a central role in double-strand break (DSB) repair, DNA recombination, maintenance of telomere integrity and meiosis. The MRN complex is involved in the repair of DNA double-strand breaks (DSBs) via homologous recombination (HR), an error-free mechanism which primarily occurs during S and G2 phases. The complex (1) mediates the end resection of damaged DNA, which generates proper single-stranded DNA, a key initial steps in HR, and is (2) required for the recruitment of other repair factors and efficient activation of ATM and ATR upon DNA damage. The MRN complex possesses single-strand endonuclease activity and double-strand-specific 3'-5' exonuclease activity, which are provided by MRE11, to initiate end resection, which is required for single-strand invasion and recombination. Within the MRN complex, NBN acts as a protein-protein adapter, which specifically recognizes and binds phosphorylated proteins, promoting their recruitment to DNA damage sites. Recruits MRE11 and RAD50 components of the MRN complex to DSBs in response to DNA damage. Promotes the recruitment of PI3/PI4-kinase family members ATM, ATR, and probably DNA-PKcs to the DNA damage sites, activating their functions. Mediates the recruitment of phosphorylated RBBP8/CtIP to DSBs, leading to cooperation between the MRN complex and RBBP8/CtIP to initiate end resection. RBBP8/CtIP specifically promotes the endonuclease activity of the MRN complex to clear DNA ends containing protein adducts. The MRN complex is also required for the processing of R-loops. NBN also functions in telomere length maintenance via its interaction with TERF2: interaction with TERF2 during G1 phase preventing recruitment of DCLRE1B/Apollo to telomeres. NBN also promotes DNA repair choice at dysfunctional telomeres: NBN phosphorylation by CDK2 promotes non-homologous end joining repair at telomeres, while unphosphorylated NBN promotes microhomology-mediated end-joining (MMEJ) repair. Enhances AKT1 phosphorylation possibly by association with the mTORC2 complex. This Homo sapiens (Human) protein is Nibrin.